Reading from the N-terminus, the 357-residue chain is Histidinol-phosphate aminotransferase (357 aa).

Lys222 bears the N6-(pyridoxal phosphate)lysine mark.

The protein belongs to the class-II pyridoxal-phosphate-dependent aminotransferase family. Histidinol-phosphate aminotransferase subfamily. Homodimer. The cofactor is pyridoxal 5'-phosphate.

It carries out the reaction L-histidinol phosphate + 2-oxoglutarate = 3-(imidazol-4-yl)-2-oxopropyl phosphate + L-glutamate. It functions in the pathway amino-acid biosynthesis; L-histidine biosynthesis; L-histidine from 5-phospho-alpha-D-ribose 1-diphosphate: step 7/9. The polypeptide is Histidinol-phosphate aminotransferase (Leuconostoc mesenteroides subsp. mesenteroides (strain ATCC 8293 / DSM 20343 / BCRC 11652 / CCM 1803 / JCM 6124 / NCDO 523 / NBRC 100496 / NCIMB 8023 / NCTC 12954 / NRRL B-1118 / 37Y)).